Consider the following 548-residue polypeptide: MANEVISGEQLQRVIRDAADLVVSSAGVTLGPEGRPVIMSKSYGGPEVTKDGYKVMNQLKPEDEKVAKIVELLNQATSQANEKAGDGTTTATILVGNMIKNAHKHIAAQRSRMKLKSGMKRARDEVVKYIQSVAKKINSEEEIAQVGSISANGNSEIGGKIAEAMNKVGKEGVITVEEGKGLDEFSVSVVQGMVFDRGYVSPYFITNPEKMIVEFDNPYVLLANKKLSSIQPMVPLLETIVRSNRAVVIIAEDVEGEALTSLVLSKMRGSLKACAVKAPGFGDRRSEMLEDIRILTGAKTLVSDDLGVTVESLTVEDLGTAKSIIISKDSTTIVDGGGEKTAIEARVKQIKTQIDKTTSDYDKEKLQERLAKLAGGVAVLKVGGATEVEVKERKDRVEDALHATRAAVEEGIVPGGGATLLSAIAVLEKLSSDDDDEQAGINIVKTALKAPISQIVENAGEDASVITYNLLESKDPNRIFDARELKYVDAFKAGIIDPAKVVRVALESAVSVASVLVTTEALIVDLPTKDNGSSSMMPGGGMGGMGGF.

ATP-binding positions include 29 to 32 (TLGP), Lys50, 86 to 90 (DGTTT), Gly416, and Asp497.

Belongs to the chaperonin (HSP60) family. In terms of assembly, forms a cylinder of 14 subunits composed of two heptameric rings stacked back-to-back. Interacts with the co-chaperonin GroES.

Its subcellular location is the cytoplasm. It catalyses the reaction ATP + H2O + a folded polypeptide = ADP + phosphate + an unfolded polypeptide.. Functionally, together with its co-chaperonin GroES, plays an essential role in assisting protein folding. The GroEL-GroES system forms a nano-cage that allows encapsulation of the non-native substrate proteins and provides a physical environment optimized to promote and accelerate protein folding. The polypeptide is Chaperonin GroEL (Neorickettsia sennetsu (strain ATCC VR-367 / Miyayama) (Ehrlichia sennetsu)).